Here is a 301-residue protein sequence, read N- to C-terminus: ATP synthase gamma chain (301 aa).

The protein belongs to the ATPase gamma chain family. As to quaternary structure, F-type ATPases have 2 components, CF(1) - the catalytic core - and CF(0) - the membrane proton channel. CF(1) has five subunits: alpha(3), beta(3), gamma(1), delta(1), epsilon(1). CF(0) has three main subunits: a, b and c.

The protein localises to the cell inner membrane. Its function is as follows. Produces ATP from ADP in the presence of a proton gradient across the membrane. The gamma chain is believed to be important in regulating ATPase activity and the flow of protons through the CF(0) complex. This Helicobacter pylori (strain P12) protein is ATP synthase gamma chain.